The following is a 211-amino-acid chain: Pyridoxine/pyridoxamine 5'-phosphate oxidase (211 aa).

Residues 7–10 (RREY) and Lys65 each bind substrate. FMN contacts are provided by residues 60–65 (RIVLLK), 75–76 (YT), Arg81, Lys82, and Gln104. The substrate site is built by Tyr122, Arg126, and Ser130. Residues 139–140 (QS) and Trp184 each bind FMN. 190–192 (RLH) is a substrate binding site. Arg194 serves as a coordination point for FMN.

Belongs to the pyridoxamine 5'-phosphate oxidase family. As to quaternary structure, homodimer. FMN serves as cofactor.

The enzyme catalyses pyridoxamine 5'-phosphate + O2 + H2O = pyridoxal 5'-phosphate + H2O2 + NH4(+). The catalysed reaction is pyridoxine 5'-phosphate + O2 = pyridoxal 5'-phosphate + H2O2. It functions in the pathway cofactor metabolism; pyridoxal 5'-phosphate salvage; pyridoxal 5'-phosphate from pyridoxamine 5'-phosphate: step 1/1. It participates in cofactor metabolism; pyridoxal 5'-phosphate salvage; pyridoxal 5'-phosphate from pyridoxine 5'-phosphate: step 1/1. Its function is as follows. Catalyzes the oxidation of either pyridoxine 5'-phosphate (PNP) or pyridoxamine 5'-phosphate (PMP) into pyridoxal 5'-phosphate (PLP). The polypeptide is Pyridoxine/pyridoxamine 5'-phosphate oxidase (Vibrio parahaemolyticus serotype O3:K6 (strain RIMD 2210633)).